A 236-amino-acid polypeptide reads, in one-letter code: 1-(5-phosphoribosyl)-5-[(5-phosphoribosylamino)methylideneamino] imidazole-4-carboxamide isomerase (236 aa).

Aspartate 8 acts as the Proton acceptor in catalysis. The active-site Proton donor is aspartate 127.

The protein belongs to the HisA/HisF family.

The protein localises to the cytoplasm. It carries out the reaction 1-(5-phospho-beta-D-ribosyl)-5-[(5-phospho-beta-D-ribosylamino)methylideneamino]imidazole-4-carboxamide = 5-[(5-phospho-1-deoxy-D-ribulos-1-ylimino)methylamino]-1-(5-phospho-beta-D-ribosyl)imidazole-4-carboxamide. It participates in amino-acid biosynthesis; L-histidine biosynthesis; L-histidine from 5-phospho-alpha-D-ribose 1-diphosphate: step 4/9. The chain is 1-(5-phosphoribosyl)-5-[(5-phosphoribosylamino)methylideneamino] imidazole-4-carboxamide isomerase from Campylobacter fetus subsp. fetus (strain 82-40).